The chain runs to 327 residues: MYQSLMTVRETQIAIKEVKTFFEDQLAKRLELFRVSAPLFVTKRSGLNDHLNGVERPIEFDMLHSGEELEIVHSLAKWKRFALHEYGYEAGEGLYTNMNAIRRDEELDATHSIYVDQWDWEKIVQKEWRTVDYLQKTVLTIYGIFKDLEDHLFEKYPFLGKYLPEEIVFVTSQELEDKYPELTPKDREHAIAKEHGAVFIIGIGDALRSGEKHDGRAADYDDWKLNGDILFWHPVLQSSFELSSMGIRVDSKSLDEQLTKTGEDFKREYDFHKGILEDVLPLTIGGGIGQSRMCMYFLRKAHIGEVQSSVWPDDLREACKKENIHLF.

It belongs to the class-II aminoacyl-tRNA synthetase family. AsnA subfamily.

It is found in the cytoplasm. It catalyses the reaction L-aspartate + NH4(+) + ATP = L-asparagine + AMP + diphosphate + H(+). It participates in amino-acid biosynthesis; L-asparagine biosynthesis; L-asparagine from L-aspartate (ammonia route): step 1/1. This Bacillus cereus (strain ATCC 10987 / NRS 248) protein is Aspartate--ammonia ligase.